Here is a 184-residue protein sequence, read N- to C-terminus: Bifunctional protein PyrR (184 aa).

Residues 105 to 117 (VVMVDDVLFTGRT) carry the PRPP-binding motif.

Belongs to the purine/pyrimidine phosphoribosyltransferase family. PyrR subfamily.

The enzyme catalyses UMP + diphosphate = 5-phospho-alpha-D-ribose 1-diphosphate + uracil. In terms of biological role, regulates the transcription of the pyrimidine nucleotide (pyr) operon in response to exogenous pyrimidines. Its function is as follows. Also displays a weak uracil phosphoribosyltransferase activity which is not physiologically significant. In Rubrobacter xylanophilus (strain DSM 9941 / JCM 11954 / NBRC 16129 / PRD-1), this protein is Bifunctional protein PyrR.